Consider the following 480-residue polypeptide: Vacuolar protein sorting-associated protein 9A (480 aa).

One can recognise a VPS9 domain in the interval 111–255 (VKSDEELFEK…IWNIDGESLS (145 aa)). GTP is bound by residues N189 and D194. The span at 276-288 (SASSENQDNQNNL) shows a compositional bias: polar residues. 2 disordered regions span residues 276–338 (SASS…VQSI) and 418–480 (ESEE…PEHA). Positions 289-305 (DVREQKSQTLKASRDSD) are enriched in basic and acidic residues. Polar residues-rich tracts occupy residues 327-338 (ASSNPVERVQSI), 427-437 (NAVNFSEGSSK), and 451-461 (VDNTGTQQTAV).

In terms of assembly, interacts with RAB5A. Interacts with GPA3 (via C-terminus).

Its subcellular location is the cytoplasm. It is found in the golgi apparatus. The protein resides in the trans-Golgi network. It localises to the prevacuolar compartment. Functionally, functions as a guanine nucleotide exchange factor (GEF) for Rab small GTPases. Activates specifically RAB5A protein. Functions cooperatively with RAB5A to regulate post-Golgi dense vesicle-mediated transport of storage proteins to the type II protein bodies (PBII) protein storage vacuoles in developing endosperm. This chain is Vacuolar protein sorting-associated protein 9A, found in Oryza sativa subsp. japonica (Rice).